Here is a 376-residue protein sequence, read N- to C-terminus: Beta-centractin (376 aa).

At Met-1 the chain carries N-acetylmethionine. Residue Tyr-4 is modified to 3'-nitrotyrosine.

Belongs to the actin family. ARP1 subfamily.

It is found in the cytoplasm. The protein localises to the cytoskeleton. Its subcellular location is the microtubule organizing center. The protein resides in the centrosome. In terms of biological role, component of a multi-subunit complex involved in microtubule based vesicle motility. It is associated with the centrosome. The polypeptide is Beta-centractin (Actr1b) (Mus musculus (Mouse)).